The chain runs to 779 residues: Endonuclease MutS2 (779 aa).

328 to 335 contacts ATP; that stretch reads GPNTGGKT. The 76-residue stretch at 704–779 folds into the Smr domain; sequence LDLRGKRYEE…GSGATIVTLG (76 aa).

This sequence belongs to the DNA mismatch repair MutS family. MutS2 subfamily. In terms of assembly, homodimer. Binds to stalled ribosomes, contacting rRNA.

In terms of biological role, endonuclease that is involved in the suppression of homologous recombination and thus may have a key role in the control of bacterial genetic diversity. Functionally, acts as a ribosome collision sensor, splitting the ribosome into its 2 subunits. Detects stalled/collided 70S ribosomes which it binds and splits by an ATP-hydrolysis driven conformational change. Acts upstream of the ribosome quality control system (RQC), a ribosome-associated complex that mediates the extraction of incompletely synthesized nascent chains from stalled ribosomes and their subsequent degradation. Probably generates substrates for RQC. This Streptococcus agalactiae serotype III (strain NEM316) protein is Endonuclease MutS2.